Reading from the N-terminus, the 305-residue chain is Ribonuclease BN (305 aa).

H64, H66, D68, H69, H141, D212, and H270 together coordinate Zn(2+). D68 (proton acceptor) is an active-site residue.

It belongs to the RNase Z family. RNase BN subfamily. As to quaternary structure, homodimer. Requires Zn(2+) as cofactor.

In terms of biological role, zinc phosphodiesterase, which has both exoribonuclease and endoribonuclease activities. This chain is Ribonuclease BN, found in Escherichia coli O45:K1 (strain S88 / ExPEC).